The following is a 94-amino-acid chain: Large ribosomal subunit protein eL42 (94 aa).

Positions 11, 14, 71, and 74 each coordinate Zn(2+). The C4-type zinc-finger motif lies at 11–74 (CPFCKRHTIH…LDLRFRCTVC (64 aa)).

The protein belongs to the eukaryotic ribosomal protein eL42 family. In terms of assembly, part of the 50S ribosomal subunit. Zn(2+) serves as cofactor.

Its function is as follows. Binds to the 23S rRNA. The protein is Large ribosomal subunit protein eL42 of Pyrococcus abyssi (strain GE5 / Orsay).